The chain runs to 257 residues: Probable enoyl-CoA hydratase echA8 (257 aa).

Belongs to the enoyl-CoA hydratase/isomerase family.

The enzyme catalyses a (3S)-3-hydroxyacyl-CoA = a (2E)-enoyl-CoA + H2O. The catalysed reaction is a 4-saturated-(3S)-3-hydroxyacyl-CoA = a (3E)-enoyl-CoA + H2O. Functionally, could possibly oxidize fatty acids using specific components. The polypeptide is Probable enoyl-CoA hydratase echA8 (echA8) (Mycobacterium leprae (strain TN)).